The chain runs to 156 residues: Small ribosomal subunit protein uS7 (156 aa).

Belongs to the universal ribosomal protein uS7 family. Part of the 30S ribosomal subunit. Contacts proteins S9 and S11.

One of the primary rRNA binding proteins, it binds directly to 16S rRNA where it nucleates assembly of the head domain of the 30S subunit. Is located at the subunit interface close to the decoding center, probably blocks exit of the E-site tRNA. The protein is Small ribosomal subunit protein uS7 of Pectobacterium atrosepticum (strain SCRI 1043 / ATCC BAA-672) (Erwinia carotovora subsp. atroseptica).